Reading from the N-terminus, the 446-residue chain is ATP-dependent RNA helicase SUB2 (446 aa).

The residue at position 2 (Ser-2) is an N-acetylserine. Phosphoserine is present on residues Ser-13 and Ser-37. Residues 23-41 are compositionally biased toward low complexity; sequence ASKAAEAGETGAATSATEG. Positions 23 to 52 are disordered; the sequence is ASKAAEAGETGAATSATEGDNNNNTAAGDK. The Q motif signature appears at 62–90; that stretch reads TGFKDFLLKPELSRAIIDCGFEHPSEVQQ. A Helicase ATP-binding domain is found at 93 to 268; sequence IPQSIHGTDV…RRFLQNPLEI (176 aa). An ATP-binding site is contributed by 106 to 113; the sequence is AKSGLGKT. A Phosphothreonine modification is found at Thr-169. Residues 215–218 carry the DECD box motif; sequence DECD. A Helicase C-terminal domain is found at 280–441; the sequence is GLQQYYIKLE…EFPEEGIDPS (162 aa).

Belongs to the DEAD box helicase family. DECD subfamily. In terms of assembly, component of the TREX complex composed of at least SUB2, TEX1, YRA1 and the four THO complex components: HPR1, MFT1, THO2 and THP1. Interacts with HPR1, YRA1, and YRA2. SUB2 may mediate the interaction between the THO complex and YRA1. Associates with growing mRNP complexes during transcription. This association requires the presence of HPR1. Also interacts with SAC3. Interacts with THO1 in the presence of RNA; this interaction facilitates RNA binding of SUB2.

The protein resides in the nucleus. The enzyme catalyses ATP + H2O = ADP + phosphate + H(+). ATP-binding RNA helicase component of the TREX complex involved in transcription elongation and required for the export of mRNA out of the nucleus. SUB2 also plays a role in pre-mRNA splicing and spliceosome assembly. May be involved in rDNA and telomeric silencing, and maintenance of genome integrity. Associates with THO1, which facilitates RNA binding of SUB2 and likely plays a role in mRNA export. In Saccharomyces cerevisiae (strain ATCC 204508 / S288c) (Baker's yeast), this protein is ATP-dependent RNA helicase SUB2 (SUB2).